Consider the following 956-residue polypeptide: Valine--tRNA ligase (956 aa).

The 'HIGH' region signature appears at 69 to 79; that stretch reads PNITGVLHMGH. A 'KMSKS' region motif is present at residues 566-570; it reads KMSKS. Lysine 569 contributes to the ATP binding site. A coiled-coil region spans residues 885 to 911; that stretch reads LCARLQKAWQKARQKVQQVERKLADAQ.

It belongs to the class-I aminoacyl-tRNA synthetase family. ValS type 1 subfamily. In terms of assembly, monomer.

The protein localises to the cytoplasm. It carries out the reaction tRNA(Val) + L-valine + ATP = L-valyl-tRNA(Val) + AMP + diphosphate. Catalyzes the attachment of valine to tRNA(Val). As ValRS can inadvertently accommodate and process structurally similar amino acids such as threonine, to avoid such errors, it has a 'posttransfer' editing activity that hydrolyzes mischarged Thr-tRNA(Val) in a tRNA-dependent manner. In Treponema pallidum (strain Nichols), this protein is Valine--tRNA ligase.